The primary structure comprises 205 residues: Small ribosomal subunit protein uS4 (205 aa).

Positions 19–45 (IWGRPKSPVNRREYGPGQHGQRRKGKL) are disordered. One can recognise an S4 RNA-binding domain in the interval 94–157 (SRLDAVVYRA…KQLVIVLEAV (64 aa)).

It belongs to the universal ribosomal protein uS4 family. As to quaternary structure, part of the 30S ribosomal subunit. Contacts protein S5. The interaction surface between S4 and S5 is involved in control of translational fidelity.

Its function is as follows. One of the primary rRNA binding proteins, it binds directly to 16S rRNA where it nucleates assembly of the body of the 30S subunit. In terms of biological role, with S5 and S12 plays an important role in translational accuracy. This is Small ribosomal subunit protein uS4 from Brucella anthropi (strain ATCC 49188 / DSM 6882 / CCUG 24695 / JCM 21032 / LMG 3331 / NBRC 15819 / NCTC 12168 / Alc 37) (Ochrobactrum anthropi).